A 521-amino-acid chain; its full sequence is NAD(P)H-quinone oxidoreductase subunit 2 (521 aa).

The next 14 membrane-spanning stretches (helical) occupy residues 16–36, 40–60, 80–100, 110–130, 133–153, 168–188, 212–232, 246–266, 280–300, 308–328, 336–356, 380–400, 402–422, and 468–488; these read ILPE…DLIG, VALA…GLLV, LSII…LMSV, LAEF…LSAA, LVMV…MTGY, LLIG…LYGL, LGLA…ISAV, PTPV…AVAI, WHVI…VVAL, MLAY…VAGS, VFYM…IILF, LGLS…GFFG, IYIF…LGLV, and VGIV…NPLF.

The protein belongs to the complex I subunit 2 family. NDH-1 can be composed of about 15 different subunits; different subcomplexes with different compositions have been identified which probably have different functions.

It is found in the cellular thylakoid membrane. It catalyses the reaction a plastoquinone + NADH + (n+1) H(+)(in) = a plastoquinol + NAD(+) + n H(+)(out). The enzyme catalyses a plastoquinone + NADPH + (n+1) H(+)(in) = a plastoquinol + NADP(+) + n H(+)(out). In terms of biological role, NDH-1 shuttles electrons from an unknown electron donor, via FMN and iron-sulfur (Fe-S) centers, to quinones in the respiratory and/or the photosynthetic chain. The immediate electron acceptor for the enzyme in this species is believed to be plastoquinone. Couples the redox reaction to proton translocation, and thus conserves the redox energy in a proton gradient. Cyanobacterial NDH-1 also plays a role in inorganic carbon-concentration. This is NAD(P)H-quinone oxidoreductase subunit 2 from Synechocystis sp. (strain ATCC 27184 / PCC 6803 / Kazusa).